Reading from the N-terminus, the 711-residue chain is MREPALAASAMAYHPFHAPRPADFPMSAFLAAAQPSFFPALALPPGALGKPLPDPGLAGAAAAAAAAAAAAEAGLHVSALGPHPPAAHLRSLKSLEPEDEVEDDPKVTLEAKELWDQFHKLGTEMVITKSGRRMFPPFKVRVSGLDKKAKYILLMDIVAADDCRYKFHNSRWMVAGKADPEMPKRMYIHPDSPATGEQWMAKPVAFHKLKLTNNISDKHGFTILNSMHKYQPRFHIVRANDILKLPYSTFRTYVFPETDFIAVTAYQNDKITQLKIDNNPFAKGFRDTGNGRREKRKQLTLPTLRLYEEHCKPERDGAESDASSCDPPPAREPPPSPSAAPSPLRLHRARAEEKPGAADSDPEPERTGEERSAAPLGRSPSRDASPARLTEPERSRERRSPERCSKEPTEGGGDGPFSLRSLEKERPEARRKDEGRKDVGEGKEPSLAPLVVQTDSASPLGAGHLPGLAFSSHLHGQQFFGPLGAGQPLFLHPGQFAMGPGAFSAMGMGHLLASVAGGSGSSGGAGPGTAAGLDAGGLGPAASAASTAAPFPFHLSQHMLASQGIPMPTFGGLFPYPYTYMAAAAAAASALPATSAAAAAAAAAGSLSRSPFLGSARPRLRFSPYQIPVTIPPSTSLLTTGLAAEGSKGGNSREPSPLPELALRKVGGPSRGALSPSGSAKEAASELQSIQRLVSGLESQRALSPGRESPK.

Residues leucine 109–aspartate 287 constitute a DNA-binding region (T-box). A disordered region spans residues proline 313 to proline 449. Over residues aspartate 326–alanine 340 the composition is skewed to pro residues. Phosphoserine occurs at positions 336, 342, and 360. 3 stretches are compositionally biased toward basic and acidic residues: residues glutamate 363–serine 372, threonine 390–threonine 409, and serine 421–glutamate 444. The repression domain 1 (RD1) stretch occupies residues glycine 518 to alanine 602. Residues serine 623, serine 652, serine 656, and serine 675 each carry the phosphoserine modification. Positions threonine 640–leucine 687 are disordered.

Binds DNA as a monomer. Interacts with CHD4, HDAC1 and HDAC2, perhaps as components of a NuRD-like complex. Interacts with CBX3, HMGB2 and PBX1. Interacts with PML. Post-translationally, phosphorylated. May be phosphorylated by p38 MAPK in response to UV irradiation stress. In adults, highest levels in lung. Also found in heart, kidney, and ovary.

The protein localises to the nucleus. Functionally, transcription factor which acts as a transcriptional repressor. May also function as a transcriptional activator. Binds to the palindromic T site 5'-TTCACACCTAGGTGTGAA-3' DNA sequence, or a half-site, which are present in the regulatory region of several genes. Required for cardiac atrioventricular canal formation. May cooperate with NKX2.5 to negatively modulate expression of NPPA/ANF in the atrioventricular canal. May play a role as a positive regulator of TGFB2 expression, perhaps acting in concert with GATA4 in the developing outflow tract myocardium. Plays a role in limb pattern formation. Acts as a transcriptional repressor of ADAM10 gene expression, perhaps in concert with histone deacetylase HDAC1 as cofactor. Involved in branching morphogenesis in both developing lungs and adult mammary glands, via negative modulation of target genes; acting redundantly with TBX3. Required, together with TBX3, to maintain cell proliferation in the embryonic lung mesenchyme; perhaps acting downstream of SHH, BMP and TGFbeta signaling. Involved in modulating early inner ear development, acting independently of, and also redundantly with TBX3, in different subregions of the developing ear. Acts as a negative regulator of PML function in cellular senescence. Acts as a negative regulator of expression of CDKN1A/p21, IL33 and CCN4; repression of CDKN1A is enhanced in response to UV-induced stress, perhaps as a result of phosphorylation by p38 MAPK. Negatively modulates expression of CDKN2A/p19ARF and CDH1/E-cadherin. Plays a role in induction of the epithelial-mesenchymal transition (EMT). Plays a role in melanocyte proliferation, perhaps via regulation of cyclin CCND1. Involved in melanogenesis, acting via negative modulation of expression of DHICA oxidase/TYRP1 and P protein/OCA2. Involved in regulating retinal pigment epithelium (RPE) cell proliferation, perhaps via negatively modulating transcription of the transcription factor CEBPD. This chain is T-box transcription factor TBX2 (Tbx2), found in Mus musculus (Mouse).